The following is a 502-amino-acid chain: Lanosterol 14-alpha demethylase (502 aa).

A helical transmembrane segment spans residues 22 to 42 (GNLASMLLIACAFTLSLVYLF). Cysteine 448 serves as a coordination point for heme.

It belongs to the cytochrome P450 family. Requires heme as cofactor. In terms of processing, ubiquitinated by MARCHF6, leading to proteasomal degradation.

The protein resides in the endoplasmic reticulum membrane. It is found in the microsome membrane. It catalyses the reaction a 14alpha-methyl steroid + 3 reduced [NADPH--hemoprotein reductase] + 3 O2 = a Delta(14) steroid + formate + 3 oxidized [NADPH--hemoprotein reductase] + 4 H2O + 4 H(+). The enzyme catalyses lanosterol + 3 reduced [NADPH--hemoprotein reductase] + 3 O2 = 4,4-dimethyl-5alpha-cholesta-8,14,24-trien-3beta-ol + formate + 3 oxidized [NADPH--hemoprotein reductase] + 4 H2O + 4 H(+). It carries out the reaction 24,25-dihydrolanosterol + 3 reduced [NADPH--hemoprotein reductase] + 3 O2 = 4,4-dimethyl-8,14-cholestadien-3beta-ol + formate + 3 oxidized [NADPH--hemoprotein reductase] + 4 H2O + 4 H(+). The catalysed reaction is a 14alpha-methyl steroid + reduced [NADPH--hemoprotein reductase] + O2 = a 14alpha-hydroxymethyl steroid + oxidized [NADPH--hemoprotein reductase] + H2O + H(+). It catalyses the reaction a 14alpha-hydroxymethyl steroid + reduced [NADPH--hemoprotein reductase] + O2 = a 14alpha-formyl steroid + oxidized [NADPH--hemoprotein reductase] + 2 H2O + H(+). The enzyme catalyses a 14alpha-formyl steroid + reduced [NADPH--hemoprotein reductase] + O2 = a Delta(14) steroid + formate + oxidized [NADPH--hemoprotein reductase] + H2O + 2 H(+). It carries out the reaction lanosterol + reduced [NADPH--hemoprotein reductase] + O2 = 32-hydroxylanosterol + oxidized [NADPH--hemoprotein reductase] + H2O + H(+). The catalysed reaction is 32-hydroxylanosterol + reduced [NADPH--hemoprotein reductase] + O2 = 32-oxolanosterol + oxidized [NADPH--hemoprotein reductase] + 2 H2O + H(+). It catalyses the reaction 32-oxolanosterol + reduced [NADPH--hemoprotein reductase] + O2 = 4,4-dimethyl-5alpha-cholesta-8,14,24-trien-3beta-ol + formate + oxidized [NADPH--hemoprotein reductase] + H2O + 2 H(+). The enzyme catalyses 24,25-dihydrolanosterol + reduced [NADPH--hemoprotein reductase] + O2 = 32-hydroxy-24,25-dihydrolanosterol + oxidized [NADPH--hemoprotein reductase] + H2O + H(+). It carries out the reaction 32-hydroxy-24,25-dihydrolanosterol + reduced [NADPH--hemoprotein reductase] + O2 = 32-oxo-24,25-dihydrolanosterol + oxidized [NADPH--hemoprotein reductase] + 2 H2O + H(+). The catalysed reaction is 32-oxo-24,25-dihydrolanosterol + reduced [NADPH--hemoprotein reductase] + O2 = 4,4-dimethyl-8,14-cholestadien-3beta-ol + formate + oxidized [NADPH--hemoprotein reductase] + H2O + 2 H(+). It functions in the pathway steroid biosynthesis; zymosterol biosynthesis; zymosterol from lanosterol: step 1/6. Its activity is regulated as follows. Inhibited by azalanstat. Inhibited by azole antifungal agents ketoconazole, itraconazole and fluconazole. Sterol 14alpha-demethylase that plays a critical role in the cholesterol biosynthesis pathway, being cholesterol the major sterol component in mammalian membranes as well as a precursor for bile acid and steroid hormone synthesis. Cytochrome P450 monooxygenase that catalyzes the three-step oxidative removal of the 14alpha-methyl group (C-32) of sterols such as lanosterol (lanosta-8,24-dien-3beta-ol) and 24,25-dihydrolanosterol (DHL) in the form of formate, and converts the sterols to 4,4-dimethyl-5alpha-cholesta-8,14,24-trien-3beta-ol and 4,4-dimethyl-8,14-cholestadien-3beta-ol, respectively, which are intermediates of cholesterol biosynthesis. Can also demethylate substrates not intrinsic to mammals, such as eburicol (24-methylene-24,25-dihydrolanosterol), but at a lower rate than DHL. This is Lanosterol 14-alpha demethylase from Bos taurus (Bovine).